A 113-amino-acid chain; its full sequence is Transcriptional regulator RamA (113 aa).

The 99-residue stretch at 9–107 (DTIVEWIDDN…NLPPGAYRKE (99 aa)) folds into the HTH araC/xylS-type domain. DNA-binding regions (H-T-H motif) lie at residues 26–47 (DDIA…MQYK) and 74–97 (VYDI…TRTF).

Transcriptional regulator. Binds to regulatory regions of target genes, including efflux pump operon acrAB and outer membrane protein gene tolC. Represses transcription of genes belonging to the flagellar regulon, including flhD, flhB and fliC; probably thereby leading to repression of motility. Represses expression of the flhDC operon in a post-transcriptional manner. Activates expression of acrAB, perhaps thereby conferring multidrug resistance. Involved in indole- and bile-mediated regulation of acrAB; binding of bile to RamA may contribute to activation of expression of acrAB. Plays a role in regulating virulence in mice. The sequence is that of Transcriptional regulator RamA from Salmonella typhimurium (strain LT2 / SGSC1412 / ATCC 700720).